A 285-amino-acid chain; its full sequence is Energy-coupling factor transporter ATP-binding protein EcfA3 (285 aa).

In terms of domain architecture, ABC transporter spans 6 to 242 (LKVEELNYNY…KEVIRKVNLR (237 aa)). Residue 39–46 (GGNGVGKS) participates in ATP binding.

The protein belongs to the ABC transporter superfamily. Energy-coupling factor EcfA family. In terms of assembly, forms a stable energy-coupling factor (ECF) transporter complex composed of 2 membrane-embedded substrate-binding proteins (S component), 2 ATP-binding proteins (A component) and 2 transmembrane proteins (T component).

It is found in the cell membrane. In terms of biological role, ATP-binding (A) component of a common energy-coupling factor (ECF) ABC-transporter complex. Unlike classic ABC transporters this ECF transporter provides the energy necessary to transport a number of different substrates. The protein is Energy-coupling factor transporter ATP-binding protein EcfA3 of Clostridium perfringens (strain ATCC 13124 / DSM 756 / JCM 1290 / NCIMB 6125 / NCTC 8237 / Type A).